The primary structure comprises 540 residues: Mitochondrial antiviral-signaling protein (540 aa).

At Pro-2 the chain carries N-acetylproline. Residues 2–513 lie on the Cytoplasmic side of the membrane; the sequence is PFAEDKTYKY…REVPCHRPSP (512 aa). Residues Lys-7 and Lys-10 each participate in a glycyl lysine isopeptide (Lys-Gly) (interchain with G-Cter in ubiquitin) cross-link. In terms of domain architecture, CARD spans 10 to 77; it reads KYICRNFSNF…WVEYFIAALR (68 aa). The tract at residues 10–77 is required for interaction with NLRX1; the sequence is KYICRNFSNF…WVEYFIAALR (68 aa). Cys-79 is lipidated: S-palmitoyl cysteine. Positions 95-297 are disordered; it reads YQPRTSDRPP…EAPANSLPSK (203 aa). Positions 106 to 122 are enriched in pro residues; that stretch reads PLEPPSLPAERPGPPTP. The interaction with TRAF2 stretch occupies residues 143–147; that stretch reads PVQET. Composition is skewed to polar residues over residues 145-165 and 179-216; these read QETQ…QTLS and ESSS…SLTP. Phosphoserine is present on residues Ser-152, Ser-157, Ser-165, Ser-180, and Ser-188. An interaction with TRAF6 region spans residues 153 to 158; the sequence is PGENSE. A Phosphothreonine modification is found at Thr-215. Phosphoserine occurs at positions 222 and 233. Thr-234 is modified (phosphothreonine). Arg-236 carries the post-translational modification Asymmetric dimethylarginine. The span at 241–266 shows a compositional bias: low complexity; the sequence is PGPTGSVVSTGTSFSSSSPGLASAGA. A phosphoserine mark is found at Ser-253 and Ser-258. Glycyl lysine isopeptide (Lys-Gly) (interchain with G-Cter in ubiquitin) cross-links involve residues Lys-311 and Lys-325. Disordered stretches follow at residues 314–358 and 373–419; these read ANPA…RAGM and SAST…SELS. 3 stretches are compositionally biased toward polar residues: residues 317-331, 339-355, and 373-382; these read ASVS…TSSK, NALT…NSTR, and SASTVPTDGS. Residues 388-403 show a composition bias toward low complexity; it reads TPAAPTPAGATGGSSA. Position 408 is a phosphoserine (Ser-408). Residues 439 to 442 carry the pLxIS motif motif; the sequence is LAIS. Position 442 is a phosphoserine; by TBK1 (Ser-442). Positions 455–460 are interaction with TRAF6; it reads PEENEY. Residues Lys-461 and Lys-500 each participate in a glycyl lysine isopeptide (Lys-Gly) (interchain with G-Cter in ubiquitin) cross-link. A (Microbial infection) Glycyl lysine isopeptide (Lys-Gly) (interchain with G-Cter in UFM1) cross-link involves residue Lys-461. The disordered stretch occupies residues 476-507; sequence IQLLEGNPGPPADPDGGPRPQADRKFQEREVP. Basic and acidic residues predominate over residues 496–507; the sequence is QADRKFQEREVP. A helical membrane pass occupies residues 514–534; it reads GALWLQVAVTGVLVVTLLVVL. Over 535–540 the chain is Mitochondrial intermembrane; the sequence is YRRRLH.

As to quaternary structure, self-associates and polymerizes (via CARD domains) to form 400 nM long three-stranded helical filaments on mitochondria, filament nucleation requires interaction with RIGI whose CARD domains act as a template for filament assembly. Interacts with RIGI, IFIH1/MDA5, TRAF2, TRAF6 and C1QBP. May interact with FADD, RIPK1, CHUK and IKBKB. Interacts (when phosphorylated) with IRF3; following activation and phosphorylation on the pLxIS motif by TBK1, recruits IRF3. Interacts with NLRX1. Interaction with NLRX1 requires the CARD domain. Interacts with PSMA7. Interacts with TRAFD1. Interacts (via C-terminus) with PCBP2 in a complex containing MAVS/IPS1, PCBP2 and ITCH. Interacts with CYLD. Interacts with SRC. Interacts with DHX58/LGP2 and IKBKE. Interacts with STING1. Interacts with IFIT3 (via N-terminus). Interacts with TBK1 only in the presence of IFIT3. Interacts with TTLL12; the interaction prevents MAVS binding to TBK1 and IKBKE. Interacts with MUL1. Interacts with ANKRD17. Interacts with NDFIP1. Interacts with SMURF1; the interaction is mediated by NDFIP1 and leads to MAVS ubiquitination and degradation. Interacts with UBXN1; this interaction inhibits MAVS-mediated antiviral pathway. Interacts (via C-terminus) with GPATCH3; the interaction is markedly increased upon viral infection. Directly interacts (via CARD domain) with ATG5 and ATG12, either as ATG5 and ATG12 monomers or as ATG12-ATG5 conjugates. Interacts with DHX33 (via the helicase C-terminal domain). Interacts with DDX3X (via C-terminus); this interaction occurs rapidly, but transiently after Sendai virus infection. The interaction with DDX3X potentiates MAVS-mediated IFNB induction. Conversely inhibition of this interaction, for instance by HCV core protein, prevents MAVS-mediated IFNB induction. Transiently interacts with TRAF3 early during Sendai virus infection. Interacts with CLPB; the interaction is enhanced by Sendai virus infection. Interacts with TRAF3IP3. Interacts with TOMM70; the interaction is enhanced by Sendai virus infection. Interacts with ZNFX1. Interacts with N4BP3; this interaction promotes the polyubiquitination of MAVS. Interacts with TAX1BP1; this interaction induces MAVS polyubiquitination. Interacts with NLRP3; promoting NLRP3 recruitment to mitochondria and activation of the NLRP3 inflammasome. Interacts with ECSIT; this interaction bridges RIGI to the MAVS complex at the mitochondrion. Interacts with UBL7; this interaction promotes MAVS 'Lys-27'-linked ubiquitination leading to type I interferon production. Interacts (via transmembrane domain) with SMIM30/MAVI1 (via transmembrane domain); the interaction disrupts MAVS interaction with RIGI and inhibits MAVS aggregation, resulting in the repression of type I interferon signaling and innate immune responses. (Microbial infection) Interacts with hepatitis C virus (HCV) NS3/4A protease; this interaction leads to MAVS cleavage, thereby preventing the establishment of an antiviral state. In terms of assembly, (Microbial infection) Interacts with hepatitis GB virus B NS3/4A protease; this interaction leads to MAVS cleavage. As to quaternary structure, (Microbial infection) Interacts with human respiratory syncytial virus/HRSV protein NS1; this interaction disrupts MAVS binding to RIGI. (Microbial infection) Interacts with Andes virus Nnon-structural protein NS-S; this interaction may reduce MAVS ubiquitination and leads to inhibition of MAVS-induced type-I IFN signaling pathway. In terms of assembly, (Microbial infection) Interacts with Seneca Valley virus protease 3C; this interaction allows the cleavage of MAVS and subsequent suppression of host innate immunity. As to quaternary structure, (Microbial infection) Interacts with SARS-CoV virus protein ORF9b; this interaction mediates MAVS proteasomal degradation. (Microbial infection) Interacts with SARS-CoV-2 virus protein M; this interaction impairs MAVS self-association and its recruitment of downstream components. In terms of assembly, (Microbial infection) Interacts with foot-and-mouth disease virus protein VP1; this interaction competes with TRAF3 interaction to MAVS leading to suppression of host innate immunity. As to quaternary structure, (Microbial infection) Interacts with Epstein-Barr virus protein BILF1; this interaction mediates MAVS routing from mitochondria to lysosomes. In terms of processing, following activation, phosphorylated by TBK1 at Ser-442 in the pLxIS motif. The phosphorylated pLxIS motif constitutes an IRF3-binding motif, leading to recruitment of the transcription factor IRF3 to induce type-I interferons and other cytokines. Post-translationally, ubiquitinated. Undergoes 'Lys-48'-linked polyubiquitination catalyzed by ITCH; ITCH-dependent polyubiquitination is mediated by the interaction with PCBP2 and leads to MAVS/IPS1 proteasomal degradation. Ubiquitinated by RNF125, leading to its degradation by the proteasome. Undergoes 'Lys-48'-linked ubiquitination catalyzed by SMURF1. Undergoes 'Lys-48'-linked ubiquitination catalyzed by MARCHF5 at Lys-7 and Lys-500, leading to proteasomal degradation. Ubiquitinated via 'Lys-63'-linked ubiquitination at Lys-10, Lys-311 and Lys-461 by UBE2N and TRIM31, promoting MAVS polymerization and formation of three-stranded helical filaments on mitochondria. Undergoes 'Lys-63'-linked ubiquitination leading to enhanced interaction between MAVS and TRAF2. Undergoes 'Lys-27'-linked ubiquitination by TRIM21 leading to enhanced interaction between MAVS and TBK1. Deubiquitinated by USP10 leading to attenuation of RIGI-mediated MAVS aggregation and production of type I interferon. Undergoes 'Lys-48'-linked polyubiquitination catalyzed by RNF115 leading to its degradation. Palmitoylated by ZHDDC4. Palmitoylation promotes MAVS stabilization and activation by inhibiting 'Lys-48'- but facilitating 'Lys-63'-linked ubiquitination. In terms of processing, proteolytically cleaved by apoptotic caspases during apoptosis, leading to its inactivation. Cleavage by CASP3 during virus-induced apoptosis inactivates it, preventing cytokine overproduction. Post-translationally, (Microbial infection) Cleaved and degraded by hepatitis A virus (HAV) protein 3ABC allowing the virus to disrupt the activation of host IRF3 through the MDA5 pathway. (Microbial infection) Cleaved by the protease 2A of coxsackievirus B3, poliovirus and enterovirus 71 allowing the virus to disrupt the host type I interferon production. In terms of processing, (Microbial infection) Cleaved by Seneca Valley virus protease 3C allowing the virus to suppress interferon type-I production. Post-translationally, (Microbial infection) Cleaved by HCV protease NS3/4A, thereby preventing the establishment of an antiviral state. (Microbial infection) UFMylated by ULF1 in association with Epstein-Barr virus BILF1; leading to MAVS routing to the lysosome. Present in T-cells, monocytes, epithelial cells and hepatocytes (at protein level). Ubiquitously expressed, with highest levels in heart, skeletal muscle, liver, placenta and peripheral blood leukocytes.

It is found in the mitochondrion outer membrane. Its subcellular location is the mitochondrion. The protein resides in the peroxisome. In terms of biological role, adapter required for innate immune defense against viruses. Acts downstream of DHX33, RIGI and IFIH1/MDA5, which detect intracellular dsRNA produced during viral replication, to coordinate pathways leading to the activation of NF-kappa-B, IRF3 and IRF7, and to the subsequent induction of antiviral cytokines such as IFNB and RANTES (CCL5). Peroxisomal and mitochondrial MAVS act sequentially to create an antiviral cellular state. Upon viral infection, peroxisomal MAVS induces the rapid interferon-independent expression of defense factors that provide short-term protection, whereas mitochondrial MAVS activates an interferon-dependent signaling pathway with delayed kinetics, which amplifies and stabilizes the antiviral response. May activate the same pathways following detection of extracellular dsRNA by TLR3. May protect cells from apoptosis. Involved in NLRP3 inflammasome activation by mediating NLRP3 recruitment to mitochondria. The polypeptide is Mitochondrial antiviral-signaling protein (Homo sapiens (Human)).